The sequence spans 309 residues: MRGFKIFSGSAHTLFSNEVAKCLDISLSKTTINRFSDGEINVQIGESVRGKDIFIIQPTCAPANDHLMELLIMTDALKRSGAKNINAVIPYFGYARQDRKVVPRVPITAKLVANLIEQSGIHRVITMDLHAEQIQGFFDIPVDNLYGSIVFRDYLKTKSFKNPIVASPDIGGVARARHFADRIGMDLVIVDKKRERANESEVMNIIGDVDGKDVILIDDMIDTAGTMCKAADVLKSRGANSVIALGTHPVLSGPALERIAKSALDEVVVTNSIPLRVAHPKIKVLSVAPLFAEVIRRICHNESVNSLFF.

Residues 37 to 39 (DGE) and 96 to 97 (RQ) contribute to the ATP site. Histidine 130 and aspartate 169 together coordinate Mg(2+). Lysine 192 is an active-site residue. D-ribose 5-phosphate-binding positions include arginine 194, aspartate 218, and 222–226 (DTAGT).

Belongs to the ribose-phosphate pyrophosphokinase family. Class I subfamily. Homohexamer. Requires Mg(2+) as cofactor.

It localises to the cytoplasm. It catalyses the reaction D-ribose 5-phosphate + ATP = 5-phospho-alpha-D-ribose 1-diphosphate + AMP + H(+). Its pathway is metabolic intermediate biosynthesis; 5-phospho-alpha-D-ribose 1-diphosphate biosynthesis; 5-phospho-alpha-D-ribose 1-diphosphate from D-ribose 5-phosphate (route I): step 1/1. In terms of biological role, involved in the biosynthesis of the central metabolite phospho-alpha-D-ribosyl-1-pyrophosphate (PRPP) via the transfer of pyrophosphoryl group from ATP to 1-hydroxyl of ribose-5-phosphate (Rib-5-P). This is Ribose-phosphate pyrophosphokinase from Helicobacter hepaticus (strain ATCC 51449 / 3B1).